Reading from the N-terminus, the 308-residue chain is Ribosomal RNA small subunit methyltransferase H (308 aa).

S-adenosyl-L-methionine-binding positions include 34–36 (GGH), D54, F85, D99, and Q106.

This sequence belongs to the methyltransferase superfamily. RsmH family.

The protein resides in the cytoplasm. It catalyses the reaction cytidine(1402) in 16S rRNA + S-adenosyl-L-methionine = N(4)-methylcytidine(1402) in 16S rRNA + S-adenosyl-L-homocysteine + H(+). In terms of biological role, specifically methylates the N4 position of cytidine in position 1402 (C1402) of 16S rRNA. The protein is Ribosomal RNA small subunit methyltransferase H of Dichelobacter nodosus (strain VCS1703A).